The sequence spans 204 residues: FMN-dependent NADH:quinone oxidoreductase 1 (204 aa).

FMN-binding positions include S10 and 15–17; that span reads SLS.

It belongs to the azoreductase type 1 family. Homodimer. FMN serves as cofactor.

It catalyses the reaction 2 a quinone + NADH + H(+) = 2 a 1,4-benzosemiquinone + NAD(+). The catalysed reaction is N,N-dimethyl-1,4-phenylenediamine + anthranilate + 2 NAD(+) = 2-(4-dimethylaminophenyl)diazenylbenzoate + 2 NADH + 2 H(+). Its function is as follows. Quinone reductase that provides resistance to thiol-specific stress caused by electrophilic quinones. Functionally, also exhibits azoreductase activity. Catalyzes the reductive cleavage of the azo bond in aromatic azo compounds to the corresponding amines. In Rhizobium etli (strain ATCC 51251 / DSM 11541 / JCM 21823 / NBRC 15573 / CFN 42), this protein is FMN-dependent NADH:quinone oxidoreductase 1.